The sequence spans 95 residues: uncharacterized protein (95 aa).

Residues 14–50 (KMEQKLQEQLDGLLEKYTELLLGETNDELKEEVKQWI) adopt a coiled-coil conformation.

This is an uncharacterized protein from Bacillus subtilis (strain 168).